The following is a 90-amino-acid chain: MARTVNCIKLGKEAEGLDFPPYPGELGKRIWESVSKQAWADWLKHQTMLVNENRLNLADARARQYLARQMENHFFGGGADAAQGYVPPSA.

The protein belongs to the Fe(2+)-trafficking protein family.

In terms of biological role, could be a mediator in iron transactions between iron acquisition and iron-requiring processes, such as synthesis and/or repair of Fe-S clusters in biosynthetic enzymes. The protein is Probable Fe(2+)-trafficking protein of Albidiferax ferrireducens (strain ATCC BAA-621 / DSM 15236 / T118) (Rhodoferax ferrireducens).